Here is a 174-residue protein sequence, read N- to C-terminus: Guided entry of tail-anchored proteins factor 1 (174 aa).

At 1–8 the chain is on the lumenal side; sequence MSSAAADH. Residues 9–29 traverse the membrane as a helical segment; sequence WAWLLVLSFVFGCNVLRILLP. Over 30-99 the chain is Cytoplasmic; sequence SFSSFMSRVL…VKARTAQLAK (70 aa). A coiled-coil region spans residues 39–94; the sequence is LQKDAEQESQMRAEIQDMKQELSTVNMMDEFARYARLERKINKMTDKLKTHVKART. The segment at 39 to 97 is interaction with GET3/TRC40; sequence LQKDAEQESQMRAEIQDMKQELSTVNMMDEFARYARLERKINKMTDKLKTHVKARTAQL. The helical transmembrane segment at 100 to 120 threads the bilayer; sequence IKWVISVAFYVLQAALMISLI. The Lumenal segment spans residues 121–148; that stretch reads WKYYSVPVAVVPSKWITPLDRLVAFPTR. A helical transmembrane segment spans residues 149-169; sequence VAGGVGITCWILVCNKVVAIV. Over 170–174 the chain is Cytoplasmic; the sequence is LHPFS.

The protein belongs to the WRB/GET1 family. Component of the Golgi to ER traffic (GET) complex, which is composed of GET1/WRB, CAMLG/GET2 and GET3/TRC40. Within the complex, GET1 and CAMLG form a heterotetramer which is stabilized by phosphatidylinositol binding and which binds to the GET3 homodimer. Interacts with CAMLG (via C-terminus). GET3 shows a higher affinity for CAMLG than for GET1.

The protein localises to the endoplasmic reticulum membrane. Functionally, required for the post-translational delivery of tail-anchored (TA) proteins to the endoplasmic reticulum (ER). Together with CAMLG/GET2, acts as a membrane receptor for soluble GET3/TRC40, which recognizes and selectively binds the transmembrane domain of TA proteins in the cytosol. Required to ensure correct topology and ER insertion of CAMLG. The sequence is that of Guided entry of tail-anchored proteins factor 1 from Homo sapiens (Human).